Reading from the N-terminus, the 209-residue chain is Molybdenum cofactor guanylyltransferase (209 aa).

GTP is bound by residues 13 to 15 (LAG), Lys-26, Asn-54, Asp-72, and Asp-107. Residue Asp-107 coordinates Mg(2+).

The protein belongs to the MobA family. Monomer. Mg(2+) is required as a cofactor.

The protein localises to the cytoplasm. The enzyme catalyses Mo-molybdopterin + GTP + H(+) = Mo-molybdopterin guanine dinucleotide + diphosphate. In terms of biological role, transfers a GMP moiety from GTP to Mo-molybdopterin (Mo-MPT) cofactor (Moco or molybdenum cofactor) to form Mo-molybdopterin guanine dinucleotide (Mo-MGD) cofactor. The protein is Molybdenum cofactor guanylyltransferase of Nitrobacter hamburgensis (strain DSM 10229 / NCIMB 13809 / X14).